A 576-amino-acid chain; its full sequence is MFYSRYFIPTIKETPSDAEVVSHQLMLRAGMIRKLAAGIYNYLPLGLRSIRKFEAIVREEMNRAGAIEMLMPSVQPAELWEESGRWSFYGKELLRFRDRKDGEFCMGPTHEEVITDMVRREIKSYRQMPVNFYQIQTKFRDEIRPRFGLMRGREFIMKDAYSFDVDSAAADGSYELMFQAYMRIFERCGLNFRAVEADTGTIGGSSSHEFMVLADSGEDAIVSCDSCRYAANVEKAESRPAAGASTEEQLELTKTATPDMKSIADVAAFLGLATDRTIKALVYSSTTGEHVMAILRGDHELNEIKLKNCLGWDEIQMATDEEILAYTGSPVGFLGPMGLKQGVVVVADLALRGMANAVIGANEKDMHYINANLGRDFTSDRFVDLRNVEAGDPCPRCEGGKLEMWRGIEVGHVFKLGTKYSQALGATYLDADGKEQVIFMGCYGIGIGRTVAAAIEQNHDDNGIIFPLPLAPFHCSVVALNTKDKGVMAAAEEMYFRLEQQGIEVLFDDRDERPGVKFKDNDLIGIPLRIVVGSKGLSEGKVEVKIRASGEMLLLSPDEAVETIVRMVRDAVTSAQ.

The protein belongs to the class-II aminoacyl-tRNA synthetase family. ProS type 1 subfamily. In terms of assembly, homodimer.

The protein localises to the cytoplasm. It carries out the reaction tRNA(Pro) + L-proline + ATP = L-prolyl-tRNA(Pro) + AMP + diphosphate. Functionally, catalyzes the attachment of proline to tRNA(Pro) in a two-step reaction: proline is first activated by ATP to form Pro-AMP and then transferred to the acceptor end of tRNA(Pro). As ProRS can inadvertently accommodate and process non-cognate amino acids such as alanine and cysteine, to avoid such errors it has two additional distinct editing activities against alanine. One activity is designated as 'pretransfer' editing and involves the tRNA(Pro)-independent hydrolysis of activated Ala-AMP. The other activity is designated 'posttransfer' editing and involves deacylation of mischarged Ala-tRNA(Pro). The misacylated Cys-tRNA(Pro) is not edited by ProRS. The polypeptide is Proline--tRNA ligase (Pelobacter propionicus (strain DSM 2379 / NBRC 103807 / OttBd1)).